A 928-amino-acid chain; its full sequence is Putative replication origin binding protein (928 aa).

Positions 386–516 (NIVPPKGHIT…QVLRDILMTA (131 aa)) constitute a Helicase ATP-binding domain. 399–406 (ASLGTGKT) is a binding site for ATP. A DEAD box motif is present at residues 484–487 (DECD).

Belongs to the herpesviridae oribp family.

Functionally, displays bipolar ssDNA and dsDNA unwinding activities that require the same core catalytic residues for unwinding in either direction, the 3'-5' direction being more robust. This is Putative replication origin binding protein from Escherichia coli (Enterobacteria phage T5).